Here is a 265-residue protein sequence, read N- to C-terminus: 3-methyl-2-oxobutanoate hydroxymethyltransferase (265 aa).

2 residues coordinate Mg(2+): Asp45 and Asp84. Residues 45-46 (DS), Asp84, and Lys112 each bind 3-methyl-2-oxobutanoate. Glu114 serves as a coordination point for Mg(2+). The Proton acceptor role is filled by Glu181.

The protein belongs to the PanB family. In terms of assembly, homodecamer; pentamer of dimers. Mg(2+) serves as cofactor.

Its subcellular location is the cytoplasm. It carries out the reaction 3-methyl-2-oxobutanoate + (6R)-5,10-methylene-5,6,7,8-tetrahydrofolate + H2O = 2-dehydropantoate + (6S)-5,6,7,8-tetrahydrofolate. The protein operates within cofactor biosynthesis; (R)-pantothenate biosynthesis; (R)-pantoate from 3-methyl-2-oxobutanoate: step 1/2. Catalyzes the reversible reaction in which hydroxymethyl group from 5,10-methylenetetrahydrofolate is transferred onto alpha-ketoisovalerate to form ketopantoate. This Yersinia enterocolitica serotype O:8 / biotype 1B (strain NCTC 13174 / 8081) protein is 3-methyl-2-oxobutanoate hydroxymethyltransferase.